Consider the following 159-residue polypeptide: Transcriptional repressor NrdR (159 aa).

A zinc finger lies at 3-34 (CPFCGGVENKVMDSRVSRDGNAIRRRRECLAC). The ATP-cone domain maps to 49 to 139 (PTVVKKDGRR…VYRQFRDVND (91 aa)).

This sequence belongs to the NrdR family. It depends on Zn(2+) as a cofactor.

Its function is as follows. Negatively regulates transcription of bacterial ribonucleotide reductase nrd genes and operons by binding to NrdR-boxes. This chain is Transcriptional repressor NrdR, found in Syntrophus aciditrophicus (strain SB).